The sequence spans 1486 residues: MIERGKFRSLTLINWNGFFARTFDLDELVTTLSGGNGAGKSTTMAAFVTALIPDLTLLHFRNTTEAGATSGSRDKGLHGKLKAGVCYSMLDTINSRHQRVVVGVRLQQVAGRDRKVDIKPFAIQGLPMSVQPTQLVTETLNERQARVLPLNELKDKLEAMEGVQFKQFNSITDYHSLMFDLGIIARRLRSASDRSKFYRLIEASLYGGISSAITRSLRDYLLPENSGVRKAFQDMEAALRENRMTLEAIRVTQSDRDLFKHLISEATNYVAADYMRHANERRVHLDKALEFRRELHTSRQQLAAEQYKHVDMARELAEHNGAEGDLEADYQAASDHLNLVQTALRQQEKIERYEADLDELQVRLEEQNEVVAEAIERQEENEARAEAAELEVDELKSQLADYQQALDVQQTRAIQYNQAIAALNRAKELCHLPDLTADSAAEWLETFQAKELEATEKMLSLEQKMSMAQTAHSQFEQAYQLVVAINGPLARNEAWDVARELLREGVDQRHLAEQVQPLRMRLSELEQRLREQQEAERLLADFCKRQGKNFDIDELEALHQELEARIASLSDSVSNAREERMALRQEQEQLQSRIQSLMQRAPVWLAAQNSLNQLSEQCGEAFSSSQDVTEYLQQLLEREREAIVERDEVGARKNAVDEEIERLSQPGGSEDQRLNALAERFGGVLLSEIYDDVSLEDAPYFSALYGPSRHAIVVPDLSQVTEHLEGLTDCPEDLYLIEGDPQSFDDSVFSVDELEKAVVVKIADRQWRYSRFPEVPLFGRAARESRIESLHAEREVLSERFATLSFDVQKTQRLHQAFSRFIGSHLAVAFESDPEAEIRQLNSRRVELERALSNHENDNQQQRIQFEQAKEGVTALNRILPRLNLLADDSLADRVDEIRERLDEAQEAARFVQQFGNQLAKLEPIVSVLQSDPEQFEQLKEDYAYSQQMQRDARQQAFALTEVVQRRAHFSYSDSAEMLSGNSDLNEKLRERLEQAEAERTRAREALRGHAAQLSQYNQVLASLKSSYDTKKELLNDLQRELQDIGVRADSGAEERARIRRDELHAQLSNNRSRRNQLEKALTFCEAEMDNLTRKLRKLERDYFEMREQVVTAKAGWCAVMRMVKDNGVERRLHRRELAYLSADDLRSMSDKALGALRLAVADNEHLRDVLRLSEDPKRPERKIQFFVAVYQHLRERIRQDIIRTDDPVEAIEQMEIELSRLTEELTSREQKLAISSRSVANIIRKTIQREQNRIRMLNQGLQNVSFGQVNSVRLNVNVRETHAMLLDVLSEQHEQHQDLFNSNRLTFSEALAKLYQRLNPQIDMGQRTPQTIGEELLDYRNYLEMEVEVNRGSDGWLRAESGALSTGEAIGTGMSILVMVVQSWEDESRRLRGKDISPCRLLFLDEAARLDARSIATLFELCERLQMQLIIAAPENISPEKGTTYKLVRKVFQNTEHVHVVGLRGFTPQLPETLPGTVDAPSEAS.

34-41 (GGNGAGKS) serves as a coordination point for ATP. Coiled coils occupy residues 326–418 (LEAD…QYNQ), 444–480 (LETFQAKELEATEKMLSLEQKMSMAQTAHSQFEQAYQ), and 509–603 (RHLA…RAPV). Positions 666–783 (PGGSEDQRLN…EVPLFGRAAR (118 aa)) are flexible hinge. 3 coiled-coil regions span residues 835 to 923 (EAEI…AKLE), 977 to 1115 (EMLS…TAKA), and 1209 to 1266 (VEAI…QNVS).

This sequence belongs to the SMC family. MukB subfamily. Homodimerization via its hinge domain. Binds to DNA via its C-terminal region. Interacts, and probably forms a ternary complex, with MukE and MukF via its C-terminal region. The complex formation is stimulated by calcium or magnesium. Interacts with tubulin-related protein FtsZ.

The protein localises to the cytoplasm. The protein resides in the nucleoid. In terms of biological role, plays a central role in chromosome condensation, segregation and cell cycle progression. Functions as a homodimer, which is essential for chromosome partition. Involved in negative DNA supercoiling in vivo, and by this means organize and compact chromosomes. May achieve or facilitate chromosome segregation by condensation DNA from both sides of a centrally located replisome during cell division. This Escherichia fergusonii (strain ATCC 35469 / DSM 13698 / CCUG 18766 / IAM 14443 / JCM 21226 / LMG 7866 / NBRC 102419 / NCTC 12128 / CDC 0568-73) protein is Chromosome partition protein MukB.